Here is a 270-residue protein sequence, read N- to C-terminus: ATP synthase subunit a (270 aa).

The next 5 membrane-spanning stretches (helical) occupy residues 37–57 (NVHI…LGVF), 98–118 (IAPL…MDLV), 143–163 (DVNI…YYSI), 208–228 (LFGN…MLPW), and 239–259 (AIFH…LTIV).

It belongs to the ATPase A chain family. F-type ATPases have 2 components, CF(1) - the catalytic core - and CF(0) - the membrane proton channel. CF(1) has five subunits: alpha(3), beta(3), gamma(1), delta(1), epsilon(1). CF(0) has three main subunits: a(1), b(2) and c(9-12). The alpha and beta chains form an alternating ring which encloses part of the gamma chain. CF(1) is attached to CF(0) by a central stalk formed by the gamma and epsilon chains, while a peripheral stalk is formed by the delta and b chains.

The protein resides in the cell inner membrane. Its function is as follows. Key component of the proton channel; it plays a direct role in the translocation of protons across the membrane. This Vibrio cholerae serotype O1 (strain ATCC 39315 / El Tor Inaba N16961) protein is ATP synthase subunit a.